A 293-amino-acid polypeptide reads, in one-letter code: Ribosomal protein L11 methyltransferase (293 aa).

Positions 145, 166, 188, and 230 each coordinate S-adenosyl-L-methionine.

This sequence belongs to the methyltransferase superfamily. PrmA family.

The protein localises to the cytoplasm. The enzyme catalyses L-lysyl-[protein] + 3 S-adenosyl-L-methionine = N(6),N(6),N(6)-trimethyl-L-lysyl-[protein] + 3 S-adenosyl-L-homocysteine + 3 H(+). Methylates ribosomal protein L11. This is Ribosomal protein L11 methyltransferase from Shewanella baltica (strain OS195).